The following is a 102-amino-acid chain: Large ribosomal subunit protein bL21 (102 aa).

This sequence belongs to the bacterial ribosomal protein bL21 family. In terms of assembly, part of the 50S ribosomal subunit. Contacts protein L20.

Functionally, this protein binds to 23S rRNA in the presence of protein L20. This chain is Large ribosomal subunit protein bL21, found in Azorhizobium caulinodans (strain ATCC 43989 / DSM 5975 / JCM 20966 / LMG 6465 / NBRC 14845 / NCIMB 13405 / ORS 571).